Here is a 485-residue protein sequence, read N- to C-terminus: Glutamyl-tRNA(Gln) amidotransferase subunit A (485 aa).

Active-site charge relay system residues include lysine 78 and serine 153. The active-site Acyl-ester intermediate is the serine 177.

It belongs to the amidase family. GatA subfamily. Heterotrimer of A, B and C subunits.

The enzyme catalyses L-glutamyl-tRNA(Gln) + L-glutamine + ATP + H2O = L-glutaminyl-tRNA(Gln) + L-glutamate + ADP + phosphate + H(+). Functionally, allows the formation of correctly charged Gln-tRNA(Gln) through the transamidation of misacylated Glu-tRNA(Gln) in organisms which lack glutaminyl-tRNA synthetase. The reaction takes place in the presence of glutamine and ATP through an activated gamma-phospho-Glu-tRNA(Gln). This Bacillus mycoides (strain KBAB4) (Bacillus weihenstephanensis) protein is Glutamyl-tRNA(Gln) amidotransferase subunit A.